A 598-amino-acid polypeptide reads, in one-letter code: Arylsulfatase J (598 aa).

Residues 1–47 (MAPRDSAEPLPPLSPQAWAWSGKFLAMGALAGFSVLSLLTYGYLCWG) form the signal peptide. Ca(2+) is bound by residues D82, D83, and C120. The active-site Nucleophile is C120. A 3-oxoalanine (Cys) modification is found at C120. N-linked (GlcNAc...) asparagine glycosylation occurs at N155. Residue K174 coordinates substrate. The active site involves H176. Position 267 (H267) interacts with substrate. N304 and N316 each carry an N-linked (GlcNAc...) asparagine glycan. D325 and N326 together coordinate Ca(2+). Substrate is bound at residue K343. N-linked (GlcNAc...) asparagine glycosylation is found at N429, N495, N525, and N563. The disordered stretch occupies residues 532-598 (RYPPKDPRSN…IKCHPSVATG (67 aa)). Residues 559 to 583 (KKKSNKTKAKKMQKKKSKARMRKQL) show a composition bias toward basic residues.

This sequence belongs to the sulfatase family. Requires Ca(2+) as cofactor. Post-translationally, the conversion to 3-oxoalanine (also known as C-formylglycine, FGly), of a serine or cysteine residue in prokaryotes and of a cysteine residue in eukaryotes, is critical for catalytic activity.

Its subcellular location is the secreted. The sequence is that of Arylsulfatase J (Arsj) from Mus musculus (Mouse).